Consider the following 308-residue polypeptide: MELLFLGTGAGMPAKTRNVTSVALKLLEERRSVWLFDCGEATQHQILHTTIKPRKIEKIFITHLHGDHVYGLPGLLGSRSFQGGEEELTIYGPKGIKAFIETSLNVTATHLTYPLTVHEIEEGTVFEDEQFIVTAASVIHGVEAFGYRVQEKDIPGALQAGRLKEMNIPPGPVYQKIKKGETVTLDDGRIINGRDFLEPPKKGRIVAFSGDTRASERVTELARNADVLVHEATFAKEDAKLAHNYYHATTEQAAQTAKKAGAKQLILTHISARYQGESPIERLEHEAKAVFENSKIAFDFMEVTVERS.

Zn(2+) contacts are provided by histidine 63, histidine 65, aspartate 67, histidine 68, histidine 140, aspartate 211, and histidine 269. Residue aspartate 67 is the Proton acceptor of the active site.

Belongs to the RNase Z family. In terms of assembly, homodimer. Zn(2+) serves as cofactor.

The catalysed reaction is Endonucleolytic cleavage of RNA, removing extra 3' nucleotides from tRNA precursor, generating 3' termini of tRNAs. A 3'-hydroxy group is left at the tRNA terminus and a 5'-phosphoryl group is left at the trailer molecule.. In terms of biological role, zinc phosphodiesterase, which displays some tRNA 3'-processing endonuclease activity. Probably involved in tRNA maturation, by removing a 3'-trailer from precursor tRNA. This Bacillus velezensis (strain DSM 23117 / BGSC 10A6 / LMG 26770 / FZB42) (Bacillus amyloliquefaciens subsp. plantarum) protein is Ribonuclease Z.